Consider the following 346-residue polypeptide: UPF0425 pyridoxal phosphate-dependent protein MK0620 (346 aa).

Residue Lys-206 is modified to N6-(pyridoxal phosphate)lysine.

Pyridoxal 5'-phosphate serves as cofactor.

This is UPF0425 pyridoxal phosphate-dependent protein MK0620 from Methanopyrus kandleri (strain AV19 / DSM 6324 / JCM 9639 / NBRC 100938).